The chain runs to 63 residues: Progonadoliberin-1 (63 aa).

A Pyrrolidone carboxylic acid modification is found at Gln-1. Gly-10 bears the Glycine amide mark.

The protein belongs to the GnRH family. The precursor is cleaved by ACE, which removes the Gly-Lys-Arg peptide at the C-terminus, leading to mature hormone. The mature form of Gonadoliberin-1 is also cleaved and degraded by ACE.

It localises to the secreted. Its function is as follows. Stimulates the secretion of gonadotropins; it stimulates the secretion of both luteinizing and follicle-stimulating hormones. The polypeptide is Progonadoliberin-1 (GNRH1) (Mesocricetus auratus (Golden hamster)).